Here is a 297-residue protein sequence, read N- to C-terminus: Protein phosphatase PTC7 homolog (297 aa).

Residues 1 to 27 (MLSVLSYGRLVARAVIGGLSQTDSRDY) constitute a mitochondrion transit peptide. Residues 28-292 (SLVSASFGFG…DDITVLLSIV (265 aa)) enclose the PPM-type phosphatase domain. Mn(2+)-binding residues include Asp71, Gly72, and Asp216.

Belongs to the PP2C family. Mg(2+) serves as cofactor. Mn(2+) is required as a cofactor.

The protein resides in the mitochondrion matrix. The enzyme catalyses O-phospho-L-seryl-[protein] + H2O = L-seryl-[protein] + phosphate. It carries out the reaction O-phospho-L-threonyl-[protein] + H2O = L-threonyl-[protein] + phosphate. Protein phosphatase which positively regulates biosynthesis of the ubiquinone, coenzyme Q. Dephosphorylates the ubiquinone biosynthesis protein coq7 which is likely to lead to its activation. This Danio rerio (Zebrafish) protein is Protein phosphatase PTC7 homolog (pptc7).